We begin with the raw amino-acid sequence, 256 residues long: Hemin import ATP-binding protein HmuV (256 aa).

The ABC transporter domain occupies 2–238 (ISAQNLVYSL…QALTMLYGAD (237 aa)). An ATP-binding site is contributed by 34-41 (GPNGAGKS).

Belongs to the ABC transporter superfamily. Heme (hemin) importer (TC 3.A.1.14.5) family. As to quaternary structure, the complex is composed of two ATP-binding proteins (HmuV), two transmembrane proteins (HmuU) and a solute-binding protein (HmuT).

It is found in the cell inner membrane. Part of the ABC transporter complex HmuTUV involved in hemin import. Responsible for energy coupling to the transport system. The polypeptide is Hemin import ATP-binding protein HmuV (Escherichia coli O157:H7).